The sequence spans 57 residues: Phylloseptin-Az4 (57 aa).

The first 13 residues, Leu1 to Cys13, serve as a signal peptide directing secretion. Residues Glu14–Glu35 constitute a propeptide that is removed on maturation. The interval Glu16–Glu35 is disordered. The span at Glu21–Lys32 shows a compositional bias: acidic residues. A Leucine amide modification is found at Leu56.

Expressed by the skin glands.

Its subcellular location is the secreted. Functionally, has antibacterial activity against the Gram-positive bacterium M.luteus ATCC 49732 (MIC=1.3 uM). Does not inhibit the growth of the fungus C.albicans. In Pithecopus azureus (Orange-legged monkey tree frog), this protein is Phylloseptin-Az4 (psn12).